Here is a 236-residue protein sequence, read N- to C-terminus: MTKKEMLYEGKGKKLFKTDDENLLISEFKDDLTAFNAEKRGNESGKGALNCKISTEIFHLLEKNGIKTHLVETISDTEQVVKKCKIVPIEVIVRNVATGSLTKRLGIKDGTVLPFALVEFCLKDDALGDPFINDEHCLILNLVQNEAQISEIKNMARKINSILTPFFDNKNLRLIDFKIELGLTKDNELVLADEISPDSCRFWDKFSNEKLDKDRFRQDLGNVKMAYEEVLKRILN.

This sequence belongs to the SAICAR synthetase family.

It carries out the reaction 5-amino-1-(5-phospho-D-ribosyl)imidazole-4-carboxylate + L-aspartate + ATP = (2S)-2-[5-amino-1-(5-phospho-beta-D-ribosyl)imidazole-4-carboxamido]succinate + ADP + phosphate + 2 H(+). Its pathway is purine metabolism; IMP biosynthesis via de novo pathway; 5-amino-1-(5-phospho-D-ribosyl)imidazole-4-carboxamide from 5-amino-1-(5-phospho-D-ribosyl)imidazole-4-carboxylate: step 1/2. In Campylobacter jejuni subsp. jejuni serotype O:6 (strain 81116 / NCTC 11828), this protein is Phosphoribosylaminoimidazole-succinocarboxamide synthase.